The sequence spans 240 residues: Methylthioribulose-1-phosphate dehydratase (240 aa).

C99 is a substrate binding site. Zn(2+) contacts are provided by H116 and H118. Residue E145 is the Proton donor/acceptor of the active site. H201 contacts Zn(2+).

Belongs to the aldolase class II family. MtnB subfamily. It depends on Zn(2+) as a cofactor.

The protein localises to the cytoplasm. It carries out the reaction 5-(methylsulfanyl)-D-ribulose 1-phosphate = 5-methylsulfanyl-2,3-dioxopentyl phosphate + H2O. The protein operates within amino-acid biosynthesis; L-methionine biosynthesis via salvage pathway; L-methionine from S-methyl-5-thio-alpha-D-ribose 1-phosphate: step 2/6. Its function is as follows. Catalyzes the dehydration of methylthioribulose-1-phosphate (MTRu-1-P) into 2,3-diketo-5-methylthiopentyl-1-phosphate (DK-MTP-1-P). This is Methylthioribulose-1-phosphate dehydratase from Paracoccidioides lutzii (strain ATCC MYA-826 / Pb01) (Paracoccidioides brasiliensis).